A 244-amino-acid polypeptide reads, in one-letter code: NAD reductase coq12 (244 aa).

The disordered stretch occupies residues 131 to 158 (NPLMNSEKNSTSVEDLPGSNRTQQTSSH). The segment covering 132–158 (PLMNSEKNSTSVEDLPGSNRTQQTSSH) has biased composition (polar residues).

It localises to the mitochondrion. It carries out the reaction a reduced flavin + NAD(+) = an oxidized flavin + NADH + 2 H(+). In terms of biological role, NADH-dependent flavin reductase that acts in the coenzyme Q biosynthetic pathway. Required for synthesis of the p-hydroxybenzoic acid (PHB) precursor to form a quinone backbone. The protein is NAD reductase coq12 of Schizosaccharomyces pombe (strain 972 / ATCC 24843) (Fission yeast).